Consider the following 241-residue polypeptide: 3-dehydroquinate dehydratase (241 aa).

Residues 35 to 37 and Arg70 each bind 3-dehydroquinate; that span reads ELR. His133 serves as the catalytic Proton donor/acceptor. The active-site Schiff-base intermediate with substrate is Lys160. Residues Arg202 and Gln225 each coordinate 3-dehydroquinate.

The protein belongs to the type-I 3-dehydroquinase family. Homodimer.

It carries out the reaction 3-dehydroquinate = 3-dehydroshikimate + H2O. Its pathway is metabolic intermediate biosynthesis; chorismate biosynthesis; chorismate from D-erythrose 4-phosphate and phosphoenolpyruvate: step 3/7. Its function is as follows. Involved in the third step of the chorismate pathway, which leads to the biosynthesis of aromatic amino acids. Catalyzes the cis-dehydration of 3-dehydroquinate (DHQ) and introduces the first double bond of the aromatic ring to yield 3-dehydroshikimate. The protein is 3-dehydroquinate dehydratase of Staphylococcus haemolyticus (strain JCSC1435).